Consider the following 224-residue polypeptide: Polysialic acid transport ATP-binding protein KpsT (224 aa).

In terms of domain architecture, ABC transporter spans 2 to 223; that stretch reads IKIENLTKSY…EYKMYQDLDI (222 aa). 38–45 is an ATP binding site; it reads GRNGAGKS.

Belongs to the ABC transporter superfamily.

Its subcellular location is the cell inner membrane. Functionally, putative ATP-binding protein, and an energy coupling component for the transport of polysialic acid across the cytoplasmic membrane. This is Polysialic acid transport ATP-binding protein KpsT (kpsT) from Escherichia coli.